An 81-amino-acid chain; its full sequence is NADH-ubiquinone oxidoreductase chain 6 (81 aa).

The next 3 membrane-spanning stretches (helical) occupy residues 1-21, 27-47, and 48-68; these read MTYF…GVAS, YGVV…LSLG, and VSFV…VVFV.

Belongs to the complex I subunit 6 family.

It localises to the mitochondrion membrane. It carries out the reaction a ubiquinone + NADH + 5 H(+)(in) = a ubiquinol + NAD(+) + 4 H(+)(out). Core subunit of the mitochondrial membrane respiratory chain NADH dehydrogenase (Complex I) that is believed to belong to the minimal assembly required for catalysis. Complex I functions in the transfer of electrons from NADH to the respiratory chain. The immediate electron acceptor for the enzyme is believed to be ubiquinone. This is NADH-ubiquinone oxidoreductase chain 6 (MT-ND6) from Anas platyrhynchos (Mallard).